Reading from the N-terminus, the 659-residue chain is Exoribonuclease 2 (659 aa).

One can recognise an RNB domain in the interval 189-532; it reads RRDLTALHFV…NHRLIKACLA (344 aa). Residues 577–659 enclose the S1 motif domain; sequence NPEFRAEVQD…ETRSLIGNLV (83 aa).

The protein belongs to the RNR ribonuclease family. RNase II subfamily.

The protein localises to the cytoplasm. The enzyme catalyses Exonucleolytic cleavage in the 3'- to 5'-direction to yield nucleoside 5'-phosphates.. Functionally, involved in mRNA degradation. Hydrolyzes single-stranded polyribonucleotides processively in the 3' to 5' direction. This chain is Exoribonuclease 2, found in Mannheimia succiniciproducens (strain KCTC 0769BP / MBEL55E).